The primary structure comprises 210 residues: Thymidylate kinase (210 aa).

Residue 10-17 (GPEGAGKS) participates in ATP binding.

Belongs to the thymidylate kinase family.

It carries out the reaction dTMP + ATP = dTDP + ADP. Phosphorylation of dTMP to form dTDP in both de novo and salvage pathways of dTTP synthesis. This Pseudomonas paraeruginosa (strain DSM 24068 / PA7) (Pseudomonas aeruginosa (strain PA7)) protein is Thymidylate kinase.